The sequence spans 329 residues: Transcription factor RAX1 (329 aa).

HTH myb-type domains are found at residues 9–62 (KTKV…LNYL) and 63–117 (RPNI…RKKL). 2 consecutive DNA-binding regions (H-T-H motif) follow at residues 38 to 62 (WISF…LNYL) and 90 to 113 (WSII…NTKL). Low complexity-rich tracts occupy residues 122-131 (SDSSSSAMAS) and 144-154 (PTSPTTIPSSS). The tract at residues 122 to 162 (SDSSSSAMASPYLNPISQDVKRPTSPTTIPSSSYNPYAENP) is disordered.

As to expression, mostly expressed in roots. Also present in shoot tips and flower buds.

The protein localises to the nucleus. Its function is as follows. Transcription activator of genes involved in the regulation of meristematic competence, such as CUC2. Positively regulates axillary meristems (AMs) formation and development, especially at early phases of vegetative growth, probably by specifying a stem cell niche for AM formation. Modulates the negative regulation mediated by gibberellic acid on the timing of developmental phase transitions. In Arabidopsis thaliana (Mouse-ear cress), this protein is Transcription factor RAX1 (RAX1).